The chain runs to 147 residues: Transcriptional regulator FurA (147 aa).

A DNA-binding region spans residues 1-85 (MSSIPDYAEQ…GSVARYESRV (85 aa)). Positions 34 and 82 each coordinate Zn(2+). The interval 86–147 (GDNHHHIVCR…SISDTSRSHP (62 aa)) is dimerization. Positions 87 and 89 each coordinate Fe cation. Zn(2+) is bound by residues His91, Cys94, Cys97, and Asp102. Glu109 provides a ligand contact to Fe cation.

It belongs to the Fur family. As to quaternary structure, homodimer.

It is found in the cytoplasm. Represses transcription of the catalase-peroxidase gene katG and its own transcription by binding to the promoter region in a redox-dependent manner. The chain is Transcriptional regulator FurA (furA) from Mycobacterium bovis (strain ATCC BAA-935 / AF2122/97).